Here is a 200-residue protein sequence, read N- to C-terminus: Casparian strip membrane protein 2 (200 aa).

Topologically, residues 1–37 (MMKSDSVAIDVPESSSVAKRKAPFMANIRDENGGYKK) are cytoplasmic. A helical transmembrane segment spans residues 38–58 (GLAIFDFILRLGAIAAALGAA). The Extracellular portion of the chain corresponds to 59-88 (STMGTSDETLPFFTQFFQFNAGYDDFPTFQ). The helical transmembrane segment at 89–109 (FFVIAMAMVAGYLVLSLPFSI) threads the bilayer. At 110–121 (VSICRPHAAGPR) the chain is on the cytoplasmic side. The helical transmembrane segment at 122 to 142 (ILLFILDTVALTLNAAAGAAA) threads the bilayer. Topologically, residues 143-175 (ADIVYLAHNGNQTTNWLAICLQFGDFCREVSGS) are extracellular. Asn153 is a glycosylation site (N-linked (GlcNAc...) asparagine). A helical transmembrane segment spans residues 176-196 (VVASFASVVILMVLVVMSGLA). The Cytoplasmic portion of the chain corresponds to 197 to 200 (LRRY).

This sequence belongs to the Casparian strip membrane proteins (CASP) family. Homodimer and heterodimers.

It is found in the cell membrane. Regulates membrane-cell wall junctions and localized cell wall deposition. Required for establishment of the Casparian strip membrane domain (CSD) and the subsequent formation of Casparian strips, a cell wall modification of the root endodermis that determines an apoplastic barrier between the intraorganismal apoplasm and the extraorganismal apoplasm and prevents lateral diffusion. This chain is Casparian strip membrane protein 2, found in Ricinus communis (Castor bean).